A 103-amino-acid polypeptide reads, in one-letter code: Large ribosomal subunit protein bL21 (103 aa).

It belongs to the bacterial ribosomal protein bL21 family. As to quaternary structure, part of the 50S ribosomal subunit. Contacts protein L20.

This protein binds to 23S rRNA in the presence of protein L20. In Clostridioides difficile (strain 630) (Peptoclostridium difficile), this protein is Large ribosomal subunit protein bL21.